Consider the following 236-residue polypeptide: 1-(5-phosphoribosyl)-5-[(5-phosphoribosylamino)methylideneamino] imidazole-4-carboxamide isomerase (236 aa).

Catalysis depends on Asp-8, which acts as the Proton acceptor. Asp-127 functions as the Proton donor in the catalytic mechanism.

Belongs to the HisA/HisF family.

It localises to the cytoplasm. The catalysed reaction is 1-(5-phospho-beta-D-ribosyl)-5-[(5-phospho-beta-D-ribosylamino)methylideneamino]imidazole-4-carboxamide = 5-[(5-phospho-1-deoxy-D-ribulos-1-ylimino)methylamino]-1-(5-phospho-beta-D-ribosyl)imidazole-4-carboxamide. It participates in amino-acid biosynthesis; L-histidine biosynthesis; L-histidine from 5-phospho-alpha-D-ribose 1-diphosphate: step 4/9. The sequence is that of 1-(5-phosphoribosyl)-5-[(5-phosphoribosylamino)methylideneamino] imidazole-4-carboxamide isomerase from Campylobacter concisus (strain 13826).